A 778-amino-acid polypeptide reads, in one-letter code: LPS-assembly protein LptD (778 aa).

An N-terminal signal peptide occupies residues 1–23; that stretch reads MKTRYSVLSVAMTAAFYTQYAQA.

This sequence belongs to the LptD family. As to quaternary structure, component of the lipopolysaccharide transport and assembly complex. Interacts with LptE and LptA.

Its subcellular location is the cell outer membrane. Functionally, together with LptE, is involved in the assembly of lipopolysaccharide (LPS) at the surface of the outer membrane. The protein is LPS-assembly protein LptD of Actinobacillus pleuropneumoniae serotype 5b (strain L20).